Consider the following 168-residue polypeptide: Signal peptidase I V (168 aa).

Residues 1-6 are Cytoplasmic-facing; the sequence is MKKRFW. A helical transmembrane segment spans residues 7–26; the sequence is FLAGVVSVVLAIQVKNAVFI. Residues 27 to 168 lie on the Extracellular side of the membrane; the sequence is DYKVEGVSMN…NIVGVISDAE (142 aa). Active-site residues include Ser-34 and Lys-75.

The protein belongs to the peptidase S26 family.

It is found in the cell membrane. The enzyme catalyses Cleavage of hydrophobic, N-terminal signal or leader sequences from secreted and periplasmic proteins.. This Bacillus subtilis (strain 168) protein is Signal peptidase I V (sipV).